The sequence spans 534 residues: Blue-light-activated protein (534 aa).

One can recognise a PAS domain in the interval 20–93 (GKDIFFAAVE…QSIRDAIAQR (74 aa)). Cysteine 70 carries the post-translational modification S-4a-FMN cysteine. Residues 94-148 (NDISAEIINYRKDGSSFWNALFISPVYNDAGDLIYFFASQLDISRRKDAEEALRQ) enclose the PAC domain. The Histidine kinase domain occupies 161-390 (GIAHDFNNLL…TLRLYFPVDE (230 aa)). At histidine 164 the chain carries Phosphohistidine; by autocatalysis. In terms of domain architecture, Response regulatory spans 411–527 (RILIVEDRPD…DLARKVRQVL (117 aa)). Residue aspartate 461 is modified to 4-aspartylphosphate.

FMN binds covalently to cysteine after exposure to blue light and this bond is spontaneously broken in the dark.

The enzyme catalyses ATP + protein L-histidine = ADP + protein N-phospho-L-histidine.. Its function is as follows. Photosensitive kinase and response regulator that is involved in increased bacterial virulence upon exposure to light. This is Blue-light-activated protein from Pseudomonas syringae pv. tomato (strain ATCC BAA-871 / DC3000).